Consider the following 353-residue polypeptide: (-)-beta-caryophyllene synthase ((2E,6E)-farnesyl diphosphate cyclizing) (353 aa).

Residues Asp85 and Asp89 each coordinate Mg(2+). Positions 85-89 match the DDXXD motif motif; the sequence is DDQFD. Arg179 serves as a coordination point for substrate. The Mg(2+) site is built by Asn225 and Ser229. Lys232 serves as a coordination point for substrate. Residue Glu233 coordinates Mg(2+). Residue 320–321 participates in substrate binding; it reads RF.

This sequence belongs to the terpene synthase family. Mg(2+) serves as cofactor.

It carries out the reaction (2E,6E)-farnesyl diphosphate = (-)-(E)-beta-caryophyllene + diphosphate. It participates in secondary metabolite biosynthesis; terpenoid biosynthesis. Its function is as follows. Catalyzes the conversion of (2E,6E)-farnesyl diphosphate (FPP) to yield the bicyclic sesquiterpene (2S,10R)-(-)-(E)-beta-caryophyllene via a probable 1,10-cyclization, which could involve the abstraction of the pyrophosphate from FPP to yield a (E,E)-germacradienyl cation. The polypeptide is (-)-beta-caryophyllene synthase ((2E,6E)-farnesyl diphosphate cyclizing) (ptlA) (Saccharothrix espanaensis (strain ATCC 51144 / DSM 44229 / JCM 9112 / NBRC 15066 / NRRL 15764)).